We begin with the raw amino-acid sequence, 404 residues long: Acetate kinase (404 aa).

A Mg(2+)-binding site is contributed by asparagine 7. Lysine 14 is an ATP binding site. Arginine 95 provides a ligand contact to substrate. Aspartate 152 acts as the Proton donor/acceptor in catalysis. Residues 212-216, 286-288, and 334-338 contribute to the ATP site; these read HLGNG, DMR, and GIGEN. Glutamate 388 contributes to the Mg(2+) binding site.

The protein belongs to the acetokinase family. Homodimer. The cofactor is Mg(2+). Mn(2+) serves as cofactor.

It localises to the cytoplasm. It catalyses the reaction acetate + ATP = acetyl phosphate + ADP. The protein operates within metabolic intermediate biosynthesis; acetyl-CoA biosynthesis; acetyl-CoA from acetate: step 1/2. Catalyzes the formation of acetyl phosphate from acetate and ATP. Can also catalyze the reverse reaction. In Lawsonia intracellularis (strain PHE/MN1-00), this protein is Acetate kinase.